The following is a 182-amino-acid chain: ATP synthase subunit delta (182 aa).

This sequence belongs to the ATPase delta chain family. In terms of assembly, F-type ATPases have 2 components, F(1) - the catalytic core - and F(0) - the membrane proton channel. F(1) has five subunits: alpha(3), beta(3), gamma(1), delta(1), epsilon(1). F(0) has three main subunits: a(1), b(2) and c(10-14). The alpha and beta chains form an alternating ring which encloses part of the gamma chain. F(1) is attached to F(0) by a central stalk formed by the gamma and epsilon chains, while a peripheral stalk is formed by the delta and b chains.

It is found in the cell membrane. Its function is as follows. F(1)F(0) ATP synthase produces ATP from ADP in the presence of a proton or sodium gradient. F-type ATPases consist of two structural domains, F(1) containing the extramembraneous catalytic core and F(0) containing the membrane proton channel, linked together by a central stalk and a peripheral stalk. During catalysis, ATP synthesis in the catalytic domain of F(1) is coupled via a rotary mechanism of the central stalk subunits to proton translocation. This protein is part of the stalk that links CF(0) to CF(1). It either transmits conformational changes from CF(0) to CF(1) or is implicated in proton conduction. This is ATP synthase subunit delta from Syntrophomonas wolfei subsp. wolfei (strain DSM 2245B / Goettingen).